A 110-amino-acid polypeptide reads, in one-letter code: Endoribonuclease SymE (110 aa).

Residues 29–74 form the SpoVT-AbrB domain; sequence SSYPEYTRIPAITLKGQWLEDAGFTTGTQVDVRVMNGCIVLTAQQP.

The protein belongs to the SymE family.

The protein resides in the cytoplasm. Involved in the degradation and recycling of damaged RNA. It is itself a target for degradation by the ATP-dependent protease Lon. This Salmonella choleraesuis (strain SC-B67) protein is Endoribonuclease SymE.